A 101-amino-acid polypeptide reads, in one-letter code: Small ribosomal subunit protein bS18c (101 aa).

This sequence belongs to the bacterial ribosomal protein bS18 family. As to quaternary structure, part of the 30S ribosomal subunit.

It is found in the plastid. The protein localises to the chloroplast. This chain is Small ribosomal subunit protein bS18c, found in Carica papaya (Papaya).